A 131-amino-acid chain; its full sequence is Large ribosomal subunit protein bL17 (131 aa).

The protein belongs to the bacterial ribosomal protein bL17 family. Part of the 50S ribosomal subunit. Contacts protein L32.

The polypeptide is Large ribosomal subunit protein bL17 (Cupriavidus metallidurans (strain ATCC 43123 / DSM 2839 / NBRC 102507 / CH34) (Ralstonia metallidurans)).